A 418-amino-acid polypeptide reads, in one-letter code: Mitochondrial outer membrane protein SLC25A46 (418 aa).

The interval 1–30 is disordered; sequence MHPRRPDGFDGLGYRGGARDEQGFGGAFPA. Serine 32 carries the phosphoserine modification. Residues 44–93 are disordered; the sequence is TTPPDIPGSRNLHWGEKSPPYGVPTTSTPYEGPTEEPFSSGGGGSVQGQS. Phosphothreonine is present on threonine 45. Residues 96–187 form a Solcar 1 repeat; the sequence is QLNRFAGFGI…GIISEFTPLP (92 aa). 6 helical membrane-spanning segments follow: residues 103–123, 167–187, 202–222, 258–278, 314–334, and 382–402; these read FGIG…CIVL, FIVQ…TPLP, HLLL…ASLI, LLPL…HYII, FPEL…LYPL, and VFGF…HAAV. A Solcar 2 repeat occupies 311–413; sequence DAYFPELIAN…QITKIIYSTL (103 aa).

This sequence belongs to the mitochondrial carrier (TC 2.A.29) family. In terms of assembly, associates with the mitochondrial contact site and cristae organizing system (MICOS) complex. May associate with the endoplasmic reticulum membrane protein complex (EMC).

The protein localises to the mitochondrion outer membrane. Its function is as follows. Transmembrane protein of the mitochondrial outer membrane that controls mitochondrial organization. May regulate the assembly of the MICOS (mitochondrial contact site and cristae organizing system) complex which is essential to the biogenesis and dynamics of mitochondrial cristae, the inwards folds of the inner mitochondrial membrane. Through its interaction with the EMC (endoplasmic reticulum membrane protein complex), could regulate mitochondrial lipid homeostasis and thereby mitochondrial fission. The protein is Mitochondrial outer membrane protein SLC25A46 of Homo sapiens (Human).